Consider the following 395-residue polypeptide: Lipoyl synthase, mitochondrial (395 aa).

The transit peptide at 1–24 directs the protein to the mitochondrion; that stretch reads MVKLPSASRIRSLATVPSTATRAF. Positions 107, 112, 118, 137, 141, 144, and 357 each coordinate [4Fe-4S] cluster. Positions 122-346 constitute a Radical SAM core domain; the sequence is GKGNATATIM…KNVAEGMGFL (225 aa).

The protein belongs to the radical SAM superfamily. Lipoyl synthase family. [4Fe-4S] cluster serves as cofactor.

The protein resides in the mitochondrion. The catalysed reaction is [[Fe-S] cluster scaffold protein carrying a second [4Fe-4S](2+) cluster] + N(6)-octanoyl-L-lysyl-[protein] + 2 oxidized [2Fe-2S]-[ferredoxin] + 2 S-adenosyl-L-methionine + 4 H(+) = [[Fe-S] cluster scaffold protein] + N(6)-[(R)-dihydrolipoyl]-L-lysyl-[protein] + 4 Fe(3+) + 2 hydrogen sulfide + 2 5'-deoxyadenosine + 2 L-methionine + 2 reduced [2Fe-2S]-[ferredoxin]. It functions in the pathway protein modification; protein lipoylation via endogenous pathway; protein N(6)-(lipoyl)lysine from octanoyl-[acyl-carrier-protein]: step 2/2. Its function is as follows. Catalyzes the radical-mediated insertion of two sulfur atoms into the C-6 and C-8 positions of the octanoyl moiety bound to the lipoyl domains of lipoate-dependent enzymes, thereby converting the octanoylated domains into lipoylated derivatives. This chain is Lipoyl synthase, mitochondrial, found in Cryptococcus neoformans var. neoformans serotype D (strain B-3501A) (Filobasidiella neoformans).